The sequence spans 143 residues: MAKKIIGFIKLQVPAGKANPSPPIGPALGQRGLNIMEFCKAFNAQTQGVEPGMPIPVVITAFADKSFTFVMKTPPATYLIKKHSGVTKGSPKPHTDKVGKLTRAQAEEIAKLKAPDLTAADLDAAVRTIAGSARSMGITVEGL.

This sequence belongs to the universal ribosomal protein uL11 family. Part of the ribosomal stalk of the 50S ribosomal subunit. Interacts with L10 and the large rRNA to form the base of the stalk. L10 forms an elongated spine to which L12 dimers bind in a sequential fashion forming a multimeric L10(L12)X complex. One or more lysine residues are methylated.

Its function is as follows. Forms part of the ribosomal stalk which helps the ribosome interact with GTP-bound translation factors. The chain is Large ribosomal subunit protein uL11 from Janthinobacterium sp. (strain Marseille) (Minibacterium massiliensis).